The following is a 473-amino-acid chain: H(+)/Cl(-) exchange transporter ClcA (473 aa).

Residues 1 to 32 (MKTDTPSLETPQAARLRRRQLIRQLLERDKTP) are Cytoplasmic-facing. The helical transmembrane segment at 33-69 (LAILFMAAVVGTLVGLAAVAFDKGVAWLQNQRMGALV) threads the bilayer. The Periplasmic segment spans residues 70-76 (HTADNYP). A helical transmembrane segment spans residues 77-100 (LLLTVAFLCSAVLAMFGYFLVRKY). Residues 106-110 (GSGIP) carry the Selectivity filter part_1 motif. Residue serine 107 participates in chloride binding. An intramembrane region (helical) is located at residues 109-116 (IPEIEGAL). The Cytoplasmic segment spans residues 117-123 (EDQRPVR). 2 helical membrane-spanning segments follow: residues 124–141 (WWRV…TLGG) and 148–166 (EGPT…LDVF). A Selectivity filter part_2 motif is present at residues 146–150 (GREGP). At 167–176 (RLKGDEARHT) the chain is on the cytoplasmic side. 2 consecutive intramembrane regions (helical) follow at residues 177–189 (LLAT…LAAA) and 193–201 (PLAGILFII). Residues 202-214 (EEMRPQFRYTLIS) lie on the Cytoplasmic side of the membrane. A helical transmembrane segment spans residues 215–232 (IKAVFIGVIMSTIMYRIF). The Periplasmic segment spans residues 233–252 (NHEVALIDVGKLSDAPLNTL). A helical membrane pass occupies residues 253–281 (WLYLILGIIFGIFGPIFNKWVLGMQDLLH). The Cytoplasmic portion of the chain corresponds to 282–287 (RVHGGN). Residues 288 to 309 (ITKWVLMGGAIGGLCGLLGFVA) traverse the membrane as a helical segment. Topologically, residues 310 to 329 (PATSGGGFNLIPIATAGNFS) are periplasmic. A run of 2 helical transmembrane segments spans residues 330-349 (MGML…LCFS) and 355-376 (GIFA…MVAV). A Selectivity filter part_3 motif is present at residues 355–359 (GIFAP). Isoleucine 356 and phenylalanine 357 together coordinate chloride. The Periplasmic segment spans residues 377 to 386 (ELFPQYHLEA). Residues 387–401 (GTFAIAGMGALLAAS) constitute an intramembrane region (helical). Residues 402–404 (IRA) constitute an intramembrane region (note=Loop between two helices). The segment at residues 405–416 (PLTGIILVLEMT) is an intramembrane region (helical). The note=Loop between two helices intramembrane region spans 417 to 421 (DNYQL). A helical transmembrane segment spans residues 422-438 (ILPMIITGLGATLLAQF). The Cytoplasmic segment spans residues 439 to 473 (TGGKPLYSAILARTLAKQEAEQLARSKAASASENT). Tyrosine 445 provides a ligand contact to chloride.

It belongs to the chloride channel (TC 2.A.49) family. ClcA subfamily. Homodimer.

The protein resides in the cell inner membrane. The enzyme catalyses 2 chloride(in) + H(+)(out) = 2 chloride(out) + H(+)(in). Proton-coupled chloride transporter. Functions as antiport system and exchanges two chloride ions for 1 proton. Probably acts as an electrical shunt for an outwardly-directed proton pump that is linked to amino acid decarboxylation, as part of the extreme acid resistance (XAR) response. This is H(+)/Cl(-) exchange transporter ClcA from Escherichia coli O157:H7.